Consider the following 224-residue polypeptide: UPF0441 protein ECA0329 (224 aa).

Residues 180-224 (TALAPKPATTSTITRGGFGETVAKQNSMQRSSASSNSSSSRSMGG) form a disordered region. Residues 204–224 (QNSMQRSSASSNSSSSRSMGG) show a composition bias toward low complexity.

Belongs to the UPF0441 family.

This is UPF0441 protein ECA0329 from Pectobacterium atrosepticum (strain SCRI 1043 / ATCC BAA-672) (Erwinia carotovora subsp. atroseptica).